The sequence spans 115 residues: Large ribosomal subunit protein bL19 (115 aa).

Belongs to the bacterial ribosomal protein bL19 family.

Its function is as follows. This protein is located at the 30S-50S ribosomal subunit interface and may play a role in the structure and function of the aminoacyl-tRNA binding site. The polypeptide is Large ribosomal subunit protein bL19 (Clostridium perfringens (strain ATCC 13124 / DSM 756 / JCM 1290 / NCIMB 6125 / NCTC 8237 / Type A)).